We begin with the raw amino-acid sequence, 431 residues long: Chaperone SurA (431 aa).

The signal sequence occupies residues 1-20 (MKLTVVTFALLAFISFNTFA). PpiC domains are found at residues 171-272 (QAEY…KIID) and 281-381 (VAEL…QLMD).

Its subcellular location is the periplasm. It carries out the reaction [protein]-peptidylproline (omega=180) = [protein]-peptidylproline (omega=0). In terms of biological role, chaperone involved in the correct folding and assembly of outer membrane proteins. Recognizes specific patterns of aromatic residues and the orientation of their side chains, which are found more frequently in integral outer membrane proteins. May act in both early periplasmic and late outer membrane-associated steps of protein maturation. The chain is Chaperone SurA from Pseudoalteromonas atlantica (strain T6c / ATCC BAA-1087).